Consider the following 117-residue polypeptide: Acrylate reductase cytochrome subunit (117 aa).

A signal peptide spans 1–22; the sequence is MKMYKLMLGLVLAGLVSLSAQA. Positions 29, 37, 40, 41, 54, 57, 58, 79, 83, 90, 93, 94, 97, 104, 107, and 108 each coordinate heme c.

As to quaternary structure, the ArdAB flavocytochrome c is composed of a FAD-containing subunit (ArdA) and a heme c-containing subunit (ArdB). Heme c is required as a cofactor.

The protein resides in the periplasm. Methacrylate acts as a competitive inhibitor of the acrylate reductase activity and suppresses the reductase activity in dose-dependent manner. Its function is as follows. Heme c-containing subunit of the ArdAB flavocytochrome c, which catalyzes the reduction of acrylate to propanoate and supports dimethylsulfoniopropionate-dependent anaerobic respiration. In vitro, can use the artificial electron donor methyl viologen. The natural electron donor is probably a low-potential cytochrome c. Also shows weak activity toward methacrylate in vitro (at a 22-fold lower rate) but cannot use other tested 2-enoates, including crotonic, fumaric, sorbic, urocanic, cinnamic, p-coumaric, caffeic or ferulic acids. The protein catalyzes a unidirectional reaction and cannot oxidize propanoate with phenazine metasulfate and dichlorophenolindophenol as electron acceptors. The chain is Acrylate reductase cytochrome subunit from Shewanella woodyi (strain ATCC 51908 / MS32).